We begin with the raw amino-acid sequence, 327 residues long: Lipoyl synthase (327 aa).

[4Fe-4S] cluster contacts are provided by Cys66, Cys71, Cys77, Cys92, Cys96, Cys99, and Ser306. Residues 78 to 295 enclose the Radical SAM core domain; sequence FSKGTATFMI…EKEAYELGFS (218 aa).

This sequence belongs to the radical SAM superfamily. Lipoyl synthase family. [4Fe-4S] cluster serves as cofactor.

Its subcellular location is the cytoplasm. The catalysed reaction is [[Fe-S] cluster scaffold protein carrying a second [4Fe-4S](2+) cluster] + N(6)-octanoyl-L-lysyl-[protein] + 2 oxidized [2Fe-2S]-[ferredoxin] + 2 S-adenosyl-L-methionine + 4 H(+) = [[Fe-S] cluster scaffold protein] + N(6)-[(R)-dihydrolipoyl]-L-lysyl-[protein] + 4 Fe(3+) + 2 hydrogen sulfide + 2 5'-deoxyadenosine + 2 L-methionine + 2 reduced [2Fe-2S]-[ferredoxin]. It participates in protein modification; protein lipoylation via endogenous pathway; protein N(6)-(lipoyl)lysine from octanoyl-[acyl-carrier-protein]: step 2/2. Its function is as follows. Catalyzes the radical-mediated insertion of two sulfur atoms into the C-6 and C-8 positions of the octanoyl moiety bound to the lipoyl domains of lipoate-dependent enzymes, thereby converting the octanoylated domains into lipoylated derivatives. The chain is Lipoyl synthase from Neisseria meningitidis serogroup B (strain ATCC BAA-335 / MC58).